A 182-amino-acid polypeptide reads, in one-letter code: Mitochondrial FAD-linked sulfhydryl oxidase erv1 (182 aa).

Residues 75-177 (RLPDVAELGR…FNCQVWSKKA (103 aa)) enclose the ERV/ALR sulfhydryl oxidase domain. FAD contacts are provided by residues 81–87 (ELGRSTW), H91, and Y120. 2 cysteine pairs are disulfide-bonded: C122-C125 and C153-C170. Residues 153–165 (CEAH…RLGK) and 176–177 (KA) contribute to the FAD site.

It depends on FAD as a cofactor.

The protein resides in the mitochondrion intermembrane space. The catalysed reaction is 2 R'C(R)SH + O2 = R'C(R)S-S(R)CR' + H2O2. Its function is as follows. FAD-dependent sulfhydryl oxidase that catalyzes disulfide bond formation. Required for the import and folding of small cysteine-containing proteins in the mitochondrial intermembrane space (IMS). The sequence is that of Mitochondrial FAD-linked sulfhydryl oxidase erv1 (erv1) from Schizosaccharomyces pombe (strain 972 / ATCC 24843) (Fission yeast).